The primary structure comprises 667 residues: Acetoacetyl-CoA synthetase (667 aa).

The protein belongs to the ATP-dependent AMP-binding enzyme family.

It localises to the cytoplasm. Its subcellular location is the cytosol. It carries out the reaction acetoacetate + ATP + CoA = acetoacetyl-CoA + AMP + diphosphate. Converts acetoacetate to acetoacetyl-CoA in the cytosol. Ketone body-utilizing enzyme, responsible for the synthesis of cholesterol and fatty acids. The protein is Acetoacetyl-CoA synthetase (AACS) of Gallus gallus (Chicken).